A 481-amino-acid chain; its full sequence is uncharacterized protein (481 aa).

It belongs to the UbiD family.

This is an uncharacterized protein from Archaeoglobus fulgidus (strain ATCC 49558 / DSM 4304 / JCM 9628 / NBRC 100126 / VC-16).